A 171-amino-acid chain; its full sequence is S-ribosylhomocysteine lyase (171 aa).

Residues histidine 54, histidine 58, and cysteine 128 each contribute to the Fe cation site.

Belongs to the LuxS family. Homodimer. Requires Fe cation as cofactor.

It catalyses the reaction S-(5-deoxy-D-ribos-5-yl)-L-homocysteine = (S)-4,5-dihydroxypentane-2,3-dione + L-homocysteine. Its function is as follows. Involved in the synthesis of autoinducer 2 (AI-2) which is secreted by bacteria and is used to communicate both the cell density and the metabolic potential of the environment. The regulation of gene expression in response to changes in cell density is called quorum sensing. Catalyzes the transformation of S-ribosylhomocysteine (RHC) to homocysteine (HC) and 4,5-dihydroxy-2,3-pentadione (DPD). This Shigella boydii serotype 4 (strain Sb227) protein is S-ribosylhomocysteine lyase.